The sequence spans 1321 residues: MASAPLPGPPASAGGDGPNLNNNNNNNNHSVRKCGYLRKQKHGHKRFFVLRGPGTGGDEASAAGGSPPQPPRLEYYESEKKWRSKAGAPKRVIALDCCLNINKRADAKHKYLIALYTKDEYFAVAAENEQEQEGWYRALTDLVSEGRSGEGGSGTTGGSCSASLPGVLGGSAGAAGCDDNYGLVTPATAVYREVWQVNLKPKGLGQSKNLTGVYRLCLSARTIGFVKLNCEQPSVTLQLMNIRRCGHSDSFFFIEVGRSAVTGPGELWMQADDSVVAQNIHETILEAMKALKELFEFRPRSKSQSSGSSATHPISVPGARRHHHLVNLPPSQTGLVRRSRTDSLAATPPAAKCTSCRVRTASEGDGGAAGGAGTAGGRPMSVAGSPLSPGPVRAPLSRSHTLSAGCGGRPSKVTLAPAGGALQHSRSMSMPVAHSPPAATSPGSLSSSSGHGSGSYPLPPGSHPHLPHPLHHPQGQRPSSGSASASGSPSDPGFMSLDEYGSSPGDLRAFSSHRSNTPESIAETPPARDGSGGELYGYMSMDRPLSHCGRPYRRVSGDGAQDLDRGLRKRTYSLTTPARQRQVPQPSSASLDEYTLMRATFSGSSGRLCPSFPASSPKVAYNPYPEDYGDIEIGSHKSSSSNLGADDGYMPMTPGAALRSGGPNSCKSDDYMPMSPTSVSAPKQILQPRLAAALPPSGAAVPAPPSGVGRTFPVNGGGYKASSPAESSPEDSGYMRMWCGSKLSMENPDPKLLPNGDYLNMSPSEAGTAGTPPDFSAALRGGSEGLKGIPGHCYSSLPRSYKAPCSCSGDNDQYVLMSSPVGRILEEERLEPQATPGAGTFGAAGGSHTQPHHSAVPSSMRPSAIGGRPEGFLGQRCRAVRPTRLSLEGLQTLPSMQEYPLPTEPKSPGEYINIDFGEAGTRLSPPAPPLLASAASSSSLLSASSPASSLGSGTPGTSSDSRQRSPLSDYMNLDFSSPKSPKPSTRSGDTVGSMDGLLSPEASSPYPPLPPRPSTSPSSLQQPLPPAPGDLYRLPPASAATSQGPTAGSSMSSEPGDNGDYTEMAFGVAATPPQPIVAPPKPEGARVASPTSGLKRLSLMDQVSGVEAFLQVSQPPDPHRGAKVIRADPQGGRRRHSSETFSSTTTVTPVSPSFAHNSKRHNSASVENVSLRKSSEGSSTLGGGDEPPTSPGQAQPLVAVPPVPQARPWNPGQPGALIGCPGGSSSPMRRETSVGFQNGLNYIAIDVRGEQGSLAQSQPQPGDKNSWSRTRSLGGLLGTVGGSGASGVCGGPGTGALPSASTYASIDFLSHHLKEATVVKE.

Residues 1–10 (MASAPLPGPP) show a composition bias toward pro residues. Disordered stretches follow at residues 1–32 (MASA…HSVR) and 51–73 (RGPG…PPRL). The PH domain occupies 16 to 144 (DGPNLNNNNN…WYRALTDLVS (129 aa)). Residues 18–28 (PNLNNNNNNNN) are compositionally biased toward low complexity. The IRS-type PTB domain maps to 191-295 (YREVWQVNLK…EAMKALKELF (105 aa)). The segment at 299 to 536 (PRSKSQSSGS…ARDGSGGELY (238 aa)) is disordered. 2 positions are modified to phosphoserine: S303 and S343. T347 bears the Phosphothreonine mark. S362 carries the post-translational modification Phosphoserine. Residues 364 to 376 (GDGGAAGGAGTAG) are compositionally biased toward gly residues. Phosphoserine occurs at positions 381, 385, and 388. Omega-N-methylarginine is present on R409. 2 stretches are compositionally biased toward low complexity: residues 435–456 (SPPA…SGSY) and 478–490 (PSSG…GSPS). Position 517 is a phosphothreonine (T517). A Phosphoserine modification is found at S520. At T524 the chain carries Phosphothreonine. Y536 is modified (phosphotyrosine; by INSR). Positions 536–539 (YGYM) match the YXXM motif 1 motif. S556 bears the Phosphoserine; by PLK1 mark. The residue at position 573 (S573) is a Phosphoserine. Phosphothreonine occurs at positions 575 and 576. S590 is modified (phosphoserine). The YXXM motif 2 signature appears at 594–597 (YTLM). A phosphoserine mark is found at S604 and S616. Phosphotyrosine is present on Y649. 2 consecutive short sequence motifs (YXXM motif) follow at residues 649-652 (YMPM) and 671-674 (YMPM). Y671 carries the post-translational modification Phosphotyrosine; by INSR. 4 positions are modified to phosphoserine: S675, S678, S727, and S728. The short motif at 734–737 (YMRM) is the YXXM motif 5 element. S762 is modified (phosphoserine). Phosphothreonine is present on T771. S796 is modified (phosphoserine). The short motif at 814-817 (YVLM) is the YXXM motif 6 element. A Phosphoserine modification is found at S819. 2 disordered regions span residues 834–871 (ATPG…RPEG) and 888–1091 (EGLQ…ASPT). The residue at position 907 (S907) is a Phosphoserine. Y911 is modified (phosphotyrosine; by INSR). Residues 930–959 (LLASAASSSSLLSASSPASSLGSGTPGTSS) show a composition bias toward low complexity. A Phosphoserine modification is found at S965. The residue at position 970 (Y970) is a Phosphotyrosine; by INSR. Over residues 1005–1014 (PYPPLPPRPS) the composition is skewed to pro residues. A compositionally biased stretch (polar residues) spans 1039–1055 (AATSQGPTAGSSMSSEP). The YXXM motif 7 motif lies at 1061–1064 (YTEM). T1071 is subject to Phosphothreonine. Residues 1072–1082 (PPQPIVAPPKP) are compositionally biased toward pro residues. Phosphoserine is present on S1089. S1098 bears the Phosphoserine; by PLK1 mark. The disordered stretch occupies residues 1110-1198 (LQVSQPPDPH…TSPGQAQPLV (89 aa)). Low complexity predominate over residues 1139–1154 (ETFSSTTTVTPVSPSF). At T1148 the chain carries Phosphothreonine. A phosphoserine mark is found at S1151, S1163, S1165, S1175, and S1190. Polar residues predominate over residues 1163–1179 (SASVENVSLRKSSEGSS). At Y1242 the chain carries Phosphotyrosine; by INSR. The interval 1251–1275 (QGSLAQSQPQPGDKNSWSRTRSLGG) is disordered. The segment covering 1253–1271 (SLAQSQPQPGDKNSWSRTR) has biased composition (polar residues). Y1303 carries the post-translational modification Phosphotyrosine; by INSR. K1314 participates in a covalent cross-link: Glycyl lysine isopeptide (Lys-Gly) (interchain with G-Cter in ubiquitin).

Interacts with PHIP. Interacts with SH2B1; this interaction enhances leptin-induced activation of the PI3-kinase pathway. Interacts with GRB2. Interacts with PIK3R1. Interacts with DVL2; this interaction promotes the Wnt/beta-catenin signaling pathway. Phosphorylation fluctuates in a cell-cycle dependent manner with hyperphosphorylation during mitosis. Phosphorylated at Ser-556 and Ser-1098 by PLK1; these phosphorylations prevent the activation of the PI3K pathway upon growth factor stimulation by inhibiting the binding between IRS2 and the PI3K pathway components and increasing the level of IRS2 protein degradation. In addition, they prevent premature mitotic exit. In terms of processing, monoubiquitinated by NEDD4; leading to enhanced IGF1 signaling. During cell cycle, ubiquitination and proteasomal degradation are controlled by FZR1. As to expression, skeletal muscle, lung, brain, liver, kidney, heart and spleen.

It localises to the cytoplasm. It is found in the cytosol. Its function is as follows. Signaling adapter protein that participates in the signal transduction from two prominent receptor tyrosine kinases, insulin receptor/INSR and insulin-like growth factor I receptor/IGF1R. Plays therefore an important role in development, growth, glucose homeostasis as well as lipid metabolism. Upon phosphorylation by the insulin receptor, functions as a signaling scaffold that propagates insulin action through binding to SH2 domain-containing proteins including the p85 regulatory subunit of PI3K, NCK1, NCK2, GRB2 or SHP2. Recruitment of GRB2 leads to the activation of the guanine nucleotide exchange factor SOS1 which in turn triggers the Ras/Raf/MEK/MAPK signaling cascade. Activation of the PI3K/AKT pathway is responsible for most of insulin metabolic effects in the cell, and the Ras/Raf/MEK/MAPK is involved in the regulation of gene expression and in cooperation with the PI3K pathway regulates cell growth and differentiation. Acts a positive regulator of the Wnt/beta-catenin signaling pathway through suppression of DVL2 autophagy-mediated degradation leading to cell proliferation. Plays a role in cell cycle progression by promoting a robust spindle assembly checkpoint (SAC) during M-phase. In macrophages, IL4-induced tyrosine phosphorylation of IRS2 leads to the recruitment and activation of phosphoinositide 3-kinase (PI3K). The polypeptide is Insulin receptor substrate 2 (Irs2) (Mus musculus (Mouse)).